We begin with the raw amino-acid sequence, 143 residues long: Ribonuclease H (143 aa).

Positions 1 to 136 (MQEIEIFCDG…CDSLAKLEAQ (136 aa)) constitute an RNase H type-1 domain. The Mg(2+) site is built by Asp-9, Glu-47, Asp-69, and Asp-128.

This sequence belongs to the RNase H family. Monomer. It depends on Mg(2+) as a cofactor.

It localises to the cytoplasm. It carries out the reaction Endonucleolytic cleavage to 5'-phosphomonoester.. In terms of biological role, endonuclease that specifically degrades the RNA of RNA-DNA hybrids. This is Ribonuclease H from Helicobacter pylori (strain HPAG1).